We begin with the raw amino-acid sequence, 386 residues long: Succinate--CoA ligase [ADP-forming] subunit beta (386 aa).

Positions 9–244 (KEILRSFGVP…LDEEDPAEVE (236 aa)) constitute an ATP-grasp domain. ATP contacts are provided by residues lysine 46, 53–55 (GRG), glutamate 99, alanine 102, and glutamate 107. The Mg(2+) site is built by asparagine 199 and aspartate 213. Residues asparagine 264 and 321-323 (GIM) contribute to the substrate site.

Belongs to the succinate/malate CoA ligase beta subunit family. As to quaternary structure, heterotetramer of two alpha and two beta subunits. It depends on Mg(2+) as a cofactor.

The catalysed reaction is succinate + ATP + CoA = succinyl-CoA + ADP + phosphate. It carries out the reaction GTP + succinate + CoA = succinyl-CoA + GDP + phosphate. The protein operates within carbohydrate metabolism; tricarboxylic acid cycle; succinate from succinyl-CoA (ligase route): step 1/1. Functionally, succinyl-CoA synthetase functions in the citric acid cycle (TCA), coupling the hydrolysis of succinyl-CoA to the synthesis of either ATP or GTP and thus represents the only step of substrate-level phosphorylation in the TCA. The beta subunit provides nucleotide specificity of the enzyme and binds the substrate succinate, while the binding sites for coenzyme A and phosphate are found in the alpha subunit. This Acidovorax ebreus (strain TPSY) (Diaphorobacter sp. (strain TPSY)) protein is Succinate--CoA ligase [ADP-forming] subunit beta.